Here is a 255-residue protein sequence, read N- to C-terminus: MQINTIPVNPTLPRHIAIIMDGNGRWAERRSRPRTTGHRAGVKAAMRTVDFCLEKGIKMLTLFAFSSENWNRPADEVNFLMEMSIKLFGRGIEELHRRGVQVRFIGERKRFDIALVEHMTKAEHLTANNQRLILSLAVSYGGRQDITMAARALAQDVAAGRLKPEQIDEDLLGQHMALADLPPPDMFIRTSGVIRISNFLLWQIAYTELWFTDVMWPEFNSTVLQQALDDYASRERRFGLTNAQIASRGKGSIPA.

Asp21 is an active-site residue. A Mg(2+)-binding site is contributed by Asp21. Substrate is bound by residues 22–25, Trp26, Arg34, His38, and 66–68; these read GNGR and SSE. Asn69 (proton acceptor) is an active-site residue. Residues Trp70, Arg72, Arg189, and 195–197 contribute to the substrate site; that span reads RIS. Mg(2+) is bound at residue Glu208.

This sequence belongs to the UPP synthase family. As to quaternary structure, homodimer. Mg(2+) serves as cofactor.

The enzyme catalyses 8 isopentenyl diphosphate + (2E,6E)-farnesyl diphosphate = di-trans,octa-cis-undecaprenyl diphosphate + 8 diphosphate. Catalyzes the sequential condensation of isopentenyl diphosphate (IPP) with (2E,6E)-farnesyl diphosphate (E,E-FPP) to yield (2Z,6Z,10Z,14Z,18Z,22Z,26Z,30Z,34E,38E)-undecaprenyl diphosphate (di-trans,octa-cis-UPP). UPP is the precursor of glycosyl carrier lipid in the biosynthesis of bacterial cell wall polysaccharide components such as peptidoglycan and lipopolysaccharide. This Xylella fastidiosa (strain 9a5c) protein is Ditrans,polycis-undecaprenyl-diphosphate synthase ((2E,6E)-farnesyl-diphosphate specific).